The primary structure comprises 123 residues: UPF0102 protein Psyr_4114 (123 aa).

It belongs to the UPF0102 family.

The sequence is that of UPF0102 protein Psyr_4114 from Pseudomonas syringae pv. syringae (strain B728a).